Here is a 1150-residue protein sequence, read N- to C-terminus: MHPPETTTKMASVRFMVTPTKIDDIPGLSDTSPDLSSRSSSRVRFSSRESVPETSRSEPMSEMSGATTSLATVALDPPSDRTSHPQDVIEDLSQNSITGEHSQLLDDGHKKARNAYLNNSNYEEGDEYFDKNLALFEEEMDTRPKVSSLLNRMANYTNLTQGAKEHEEAENITEGKKKPTKTPQMGTFMGVYLPCLQNIFGVILFLRLTWVVGTAGVLQAFAIVLICCCCTMLTAISMSAIATNGVVPAGGSYFMISRALGPEFGGAVGLCFYLGTTFAAAMYILGAIEIFLVYIVPRAAIFHSDDALKESAAMLNNMRVYGTAFLVLMVLVVFIGVRYVNKFASLFLACVIVSILAIYAGAIKSSFAPPHFPVCMLGNRTLSSRHIDVCSKTKEINNMTVPSKLWGFFCNSSQFFNATCDEYFVHNNVTSIQGIPGLASGIITENLWSNYLPKGEIIEKPSAKSSDVLGSLNHEYVLVDITTSFTLLVGIFFPSVTGIMAGSNRSGDLKDAQKSIPIGTILAILTTSFVYLSNVVLFGACIEGVVLRDKFGDAVKGNLVVGTLSWPSPWVIVIGSFFSTCGAGLQSLTGAPRLLQAIAKDNIIPFLRVFGHSKANGEPTWALLLTAAIAELGILIASLDLVAPILSMFFLMCYLFVNLACALQTLLRTPNWRPRFRYYHWALSFMGMSICLALMFISSWYYAIVAMVIAGMIYKYIEYQGAEKEWGDGIRGLSLSAARFALLRLEEGPPHTKNWRPQLLVLLKLDEDLHVKHPRLLTFASQLKAGKGLTIVGSVIVGNFLENYGEALAAEQTIKHLMEAEKVKGFCQLVVAAKLREGISHLIQSCGLGGMKHNTVVMGWPNGWRQSEDARAWKTFIGTVRVTTAAHLALLVAKNISFFPSNVEQFSEGNIDVWWIVHDGGMLMLLPFLLKQHKVWRKCSIRIFTVAQLEDNSIQMKKDLATFLYHLRIEAEVEVVEMHDSDISAYTYERTLMMEQRSQMLRHMRLSKTERDREAQLVKDRNSMLRLTSIGSDEDEETETYQEKVHMTWTKDKYMASRGQKAKSMEGFQDLLNMRPDQSNVRRMHTAVKLNEVIVNKSHEAKLVLLNMPGPPRNPEGDENYMEFLEVLTEGLERVLLVRGGGSEVITIYS.

Residues 1–135 (MHPPETTTKM…DEYFDKNLAL (135 aa)) are Cytoplasmic-facing. Residues 20 to 66 (TKIDDIPGLSDTSPDLSSRSSSRVRFSSRESVPETSRSEPMSEMSGA) form a disordered region. The span at 28–45 (LSDTSPDLSSRSSSRVRF) shows a compositional bias: low complexity. Phosphoserine occurs at positions 32 and 120. Residues 136–158 (FEEEMDTRPKVSSLLNRMANYTN) form a discontinuously helical membrane-spanning segment. Serine 147 and serine 148 together coordinate K(+). Serine 148 carries the post-translational modification Phosphoserine. Asparagine 151 is a binding site for chloride. At 159–165 (LTQGAKE) the chain is on the extracellular side. The interval 161-181 (QGAKEHEEAENITEGKKKPTK) is disordered. A compositionally biased stretch (basic and acidic residues) spans 163 to 177 (AKEHEEAENITEGKK). The chain crosses the membrane as a helical span at residues 166–188 (HEEAENITEGKKKPTKTPQMGTF). Topologically, residues 189–211 (MGVYLPCLQNIFGVILFLRLTWV) are cytoplasmic. Residues 212–245 (VGTAGVLQAFAIVLICCCCTMLTAISMSAIATNG) form a helical membrane-spanning segment. The Extracellular segment spans residues 246-263 (VVPAGGSYFMISRALGPE). 2 helical membrane passes run 264–287 (FGGAVGLCFYLGTTFAAAMYILGA) and 288–316 (IEIFLVYIVPRAAIFHSDDALKESAAMLN). Topologically, residues 317–433 (NMRVYGTAFL…FVHNNVTSIQ (117 aa)) are extracellular. Cysteine 375 and cysteine 390 are oxidised to a cystine. Residues asparagine 379, asparagine 398, asparagine 411, and asparagine 428 are each glycosylated (N-linked (GlcNAc...) asparagine). The cysteines at positions 410 and 420 are disulfide-linked. The chain crosses the membrane as a helical span at residues 434-454 (GIPGLASGIITENLWSNYLPK). Residues isoleucine 443, threonine 444, and asparagine 446 each contribute to the K(+) site. 2 residues coordinate chloride: isoleucine 443 and threonine 444. The chloride site is built by leucine 447 and tryptophan 448. Topologically, residues 455 to 464 (GEIIEKPSAK) are cytoplasmic. Residues 465–487 (SSDVLGSLNHEYVLVDITTSFTL) traverse the membrane as a helical segment. The Extracellular portion of the chain corresponds to 488 to 518 (LVGIFFPSVTGIMAGSNRSGDLKDAQKSIPI). The helical transmembrane segment at 519-545 (GTILAILTTSFVYLSNVVLFGACIEGV) threads the bilayer. Topologically, residues 546–568 (VLRDKFGDAVKGNLVVGTLSWPS) are cytoplasmic. The next 2 membrane-spanning stretches (helical) occupy residues 569–589 (PWVIVIGSFFSTCGAGLQSLT) and 590–612 (GAPRLLQAIAKDNIIPFLRVFGH). Residue isoleucine 603 participates in chloride binding. Over 613–629 (SKANGEPTWALLLTAAI) the chain is Cytoplasmic. 2 helical membrane-spanning segments follow: residues 630–649 (AELGILIASLDLVAPILSMF) and 650–665 (FLMCYLFVNLACALQT). Over 666 to 1150 (LLRTPNWRPR…GGSEVITIYS (485 aa)) the chain is Cytoplasmic. Positions 682–691 (ALSFMGMSIC) are scissor helix. A Phosphoserine modification is found at serine 736. Threonine 778 is modified (phosphothreonine). Serine 981 carries the post-translational modification Phosphoserine. Residue threonine 991 is modified to Phosphothreonine; by OXSR1 and STK39. Phosphoserine is present on residues serine 1023, serine 1029, and serine 1032. At threonine 1048 the chain carries Phosphothreonine; by OXSR1 and STK39. Tyrosine 1121 is modified (phosphotyrosine). The segment at 1133–1150 (ERVLLVRGGGSEVITIYS) is interaction with CKB.

It belongs to the SLC12A transporter family. K/Cl co-transporter subfamily. Homodimer; adopts a domain-swap conformation at the scissor helices connecting the transmembrane domain and C-terminal domain. Heterodimer with K-Cl cotransporter SLC12A5. Interacts (via C-terminus) with CKB; the interaction may be required for potassium-chloride cotransport activity. Phosphorylated, phosphorylation regulates transporter activity. Phosphorylated at Thr-991 and Thr-1048 by OXSR1/OSR1 and STK39/SPAK downstream of WNK kinases (WNK1, WNK2, WNK3 or WNK4), inhibiting the potassium-chloride cotransport activity. In terms of processing, N-glycosylated. In terms of tissue distribution, expressed in brain (at protein level). Highly expressed in heart, brain and kidney. Detected at lower levels in skeletal muscle, placenta, lung and pancreas. Detected in umbilical vein endothelial cells. As to expression, more abundant in kidney. Testis specific.

Its subcellular location is the cell membrane. The protein localises to the basolateral cell membrane. It catalyses the reaction K(+)(in) + chloride(in) = K(+)(out) + chloride(out). Inhibited following phosphorylation by OXSR1/OSR1 and STK39/SPAK: phosphorylation takes place downstream of WNK kinases (WNK1, WNK2, WNK3 or WNK4) in response to hyperosmotic stress and subsequent cell shrinkage. Activated by N-ethylmaleimide (NEM). Inhibited by DIOA, bumetanide and furosemide. Its function is as follows. Mediates electroneutral potassium-chloride cotransport when activated by cell swelling. May contribute to cell volume homeostasis in single cells. Mediates electroneutral potassium-chloride cotransport when activated by cell swelling. May contribute to cell volume homeostasis in single cells. Functionally, mediates electroneutral potassium-chloride cotransport when activated by cell swelling. May contribute to cell volume homeostasis in single cells. The protein is Solute carrier family 12 member 6 of Homo sapiens (Human).